Here is a 203-residue protein sequence, read N- to C-terminus: MSEGHIAAISKTNKRKNRRKKRRTQDVSDSSSDSSSDSENSSVEDNDTKLETVEKAASDVEDVTLSDIDMDKEEDEAALDDKKASRKEGSVLSSETVDKLNKVGLTTSDLTGNNGIHLGNIDLNKMSATLDESSNKLLENNKDKNGLKNQYLSMLFESYGDDMNELRNAPDFTSKTLVMLANVLKDGGDMFDLETLKTIVEDK.

The disordered stretch occupies residues 1 to 90 (MSEGHIAAIS…DKKASRKEGS (90 aa)). Residues 12-23 (TNKRKNRRKKRR) show a composition bias toward basic residues. The span at 27–43 (VSDSSSDSSSDSENSSV) shows a compositional bias: low complexity. A compositionally biased stretch (basic and acidic residues) spans 46-58 (NDTKLETVEKAAS). Acidic residues predominate over residues 59-78 (DVEDVTLSDIDMDKEEDEAA). Basic and acidic residues predominate over residues 79–89 (LDDKKASRKEG).

This sequence belongs to the RSA3 family. As to quaternary structure, associates with nucleolar pre-ribosomal particles.

Its subcellular location is the nucleus. It localises to the nucleolus. Functionally, required for efficient biogenesis of the 60S ribosomal subunit. This Kluyveromyces lactis (strain ATCC 8585 / CBS 2359 / DSM 70799 / NBRC 1267 / NRRL Y-1140 / WM37) (Yeast) protein is Ribosome assembly protein 3 (RSA3).